The primary structure comprises 163 residues: Protein YtsP (163 aa).

Belongs to the free Met sulfoxide reductase family.

This Bacillus subtilis (strain 168) protein is Protein YtsP (ytsP).